Consider the following 362-residue polypeptide: Peptide chain release factor 1 (362 aa).

Glutamine 240 is subject to N5-methylglutamine.

This sequence belongs to the prokaryotic/mitochondrial release factor family. Methylated by PrmC. Methylation increases the termination efficiency of RF1.

It localises to the cytoplasm. Functionally, peptide chain release factor 1 directs the termination of translation in response to the peptide chain termination codons UAG and UAA. The protein is Peptide chain release factor 1 of Bifidobacterium adolescentis (strain ATCC 15703 / DSM 20083 / NCTC 11814 / E194a).